Reading from the N-terminus, the 472-residue chain is Methanethiol oxidase (472 aa).

An N-acetylalanine modification is found at Ala-2. A phosphoserine mark is found at Ser-111, Ser-371, and Ser-467.

Belongs to the selenium-binding protein family. As to quaternary structure, interacts with USP33. In terms of processing, phosphorylated. Post-translationally, the N-terminus is blocked. In terms of tissue distribution, widely expressed. Highly expressed in liver, lung, colon, prostate, kidney and pancreas. In brain, present both in neurons and glia (at protein level). Down-regulated in lung adenocarcinoma, colorectal carcinoma and ovarian cancer. Two-fold up-regulated in brain and blood from schizophrenia patients.

Its subcellular location is the nucleus. It is found in the cytoplasm. The protein localises to the cytosol. The protein resides in the membrane. The enzyme catalyses methanethiol + O2 + H2O = hydrogen sulfide + formaldehyde + H2O2 + H(+). It participates in organosulfur degradation. Its function is as follows. Catalyzes the oxidation of methanethiol, an organosulfur compound known to be produced in substantial amounts by gut bacteria. Selenium-binding protein which may be involved in the sensing of reactive xenobiotics in the cytoplasm. May be involved in intra-Golgi protein transport. In Homo sapiens (Human), this protein is Methanethiol oxidase (SELENBP1).